The chain runs to 222 residues: Superoxide dismutase [Mn], mitochondrial (222 aa).

The N-terminal 24 residues, 1-24 (MLSRGVCGTSRQLAPALGYLGSRQ), are a transit peptide targeting the mitochondrion. His50 serves as a coordination point for Mn(2+). Tyr58 bears the 3'-nitrotyrosine mark. Lys68 and Lys75 each carry N6-acetyllysine; alternate. Residues Lys68 and Lys75 each carry the N6-succinyllysine; alternate modification. Residue His98 participates in Mn(2+) binding. Lys114 bears the N6-acetyllysine mark. N6-acetyllysine; alternate is present on residues Lys122 and Lys130. 2 positions are modified to N6-succinyllysine; alternate: Lys122 and Lys130. 2 residues coordinate Mn(2+): Asp183 and His187. Position 202 is an N6-acetyllysine (Lys202).

This sequence belongs to the iron/manganese superoxide dismutase family. Homotetramer. The cofactor is Mn(2+). Post-translationally, nitrated under oxidative stress. Nitration coupled with oxidation inhibits the catalytic activity. In terms of processing, acetylation at Lys-122 decreases enzymatic activity. Deacetylated by SIRT3 upon exposure to ionizing radiations or after long fasting. Polyubiquitinated; leading to proteasomal degradation. Deubiquitinated by USP36 which increases protein stability.

It localises to the mitochondrion matrix. The enzyme catalyses 2 superoxide + 2 H(+) = H2O2 + O2. Functionally, destroys superoxide anion radicals which are normally produced within the cells and which are toxic to biological systems. The sequence is that of Superoxide dismutase [Mn], mitochondrial (SOD2) from Pongo pygmaeus (Bornean orangutan).